We begin with the raw amino-acid sequence, 386 residues long: Phosphoglycerate kinase (386 aa).

Residues 21–23 (DLN), Arg-36, 59–62 (HLGR), Arg-113, and Arg-146 each bind substrate. Residues Lys-197, Glu-314, and 340 to 343 (GGDT) contribute to the ATP site.

It belongs to the phosphoglycerate kinase family. As to quaternary structure, monomer.

It localises to the cytoplasm. The catalysed reaction is (2R)-3-phosphoglycerate + ATP = (2R)-3-phospho-glyceroyl phosphate + ADP. The protein operates within carbohydrate degradation; glycolysis; pyruvate from D-glyceraldehyde 3-phosphate: step 2/5. The chain is Phosphoglycerate kinase from Vibrio vulnificus (strain CMCP6).